A 216-amino-acid polypeptide reads, in one-letter code: Probable GTP-binding protein EngB (216 aa).

Residues 27–201 enclose the EngB-type G domain; it reads EGIEVAFAGR…REKLDTWFSE (175 aa). GTP-binding positions include 35–42, 62–66, 80–83, 147–150, and 180–182; these read GRSNAGKS, GRTQL, DLPG, TKAD, and FSS. Mg(2+) contacts are provided by S42 and T64.

Belongs to the TRAFAC class TrmE-Era-EngA-EngB-Septin-like GTPase superfamily. EngB GTPase family. Mg(2+) serves as cofactor.

In terms of biological role, necessary for normal cell division and for the maintenance of normal septation. In Yersinia pseudotuberculosis serotype O:1b (strain IP 31758), this protein is Probable GTP-binding protein EngB.